Here is a 254-residue protein sequence, read N- to C-terminus: Triosephosphate isomerase (254 aa).

12–14 (NWK) is a substrate binding site. His-99 (electrophile) is an active-site residue. Glu-169 acts as the Proton acceptor in catalysis. Residues Gly-175, Ser-214, and 235–236 (GG) each bind substrate.

The protein belongs to the triosephosphate isomerase family. As to quaternary structure, homodimer.

Its subcellular location is the cytoplasm. It catalyses the reaction D-glyceraldehyde 3-phosphate = dihydroxyacetone phosphate. It functions in the pathway carbohydrate biosynthesis; gluconeogenesis. It participates in carbohydrate degradation; glycolysis; D-glyceraldehyde 3-phosphate from glycerone phosphate: step 1/1. Involved in the gluconeogenesis. Catalyzes stereospecifically the conversion of dihydroxyacetone phosphate (DHAP) to D-glyceraldehyde-3-phosphate (G3P). This Bartonella tribocorum (strain CIP 105476 / IBS 506) protein is Triosephosphate isomerase.